Consider the following 367-residue polypeptide: UDP-N-acetylglucosamine--N-acetylmuramyl-(pentapeptide) pyrophosphoryl-undecaprenol N-acetylglucosamine transferase (367 aa).

UDP-N-acetyl-alpha-D-glucosamine-binding positions include 15-17 (TGG), N127, R163, S191, I249, and Q294.

It belongs to the glycosyltransferase 28 family. MurG subfamily.

Its subcellular location is the cell inner membrane. The enzyme catalyses di-trans,octa-cis-undecaprenyl diphospho-N-acetyl-alpha-D-muramoyl-L-alanyl-D-glutamyl-meso-2,6-diaminopimeloyl-D-alanyl-D-alanine + UDP-N-acetyl-alpha-D-glucosamine = di-trans,octa-cis-undecaprenyl diphospho-[N-acetyl-alpha-D-glucosaminyl-(1-&gt;4)]-N-acetyl-alpha-D-muramoyl-L-alanyl-D-glutamyl-meso-2,6-diaminopimeloyl-D-alanyl-D-alanine + UDP + H(+). It participates in cell wall biogenesis; peptidoglycan biosynthesis. Its function is as follows. Cell wall formation. Catalyzes the transfer of a GlcNAc subunit on undecaprenyl-pyrophosphoryl-MurNAc-pentapeptide (lipid intermediate I) to form undecaprenyl-pyrophosphoryl-MurNAc-(pentapeptide)GlcNAc (lipid intermediate II). This is UDP-N-acetylglucosamine--N-acetylmuramyl-(pentapeptide) pyrophosphoryl-undecaprenol N-acetylglucosamine transferase from Burkholderia ambifaria (strain MC40-6).